Here is a 297-residue protein sequence, read N- to C-terminus: MASPQLCRALVSAQWVAEALRAPRAGQPLQLLDASWYLPKLGRDARREFEERHIPGAAFFDIDQCSDRTSPYDHMLPGAEHFAEYAGRLGVGAATHVVIYDASDQGLYSAPRVWWMFRAFGHHAVSLLDGGLRHWLRQNLPLSSGKSQPAPAEFRAQLDPAFIKTYEDIKENLESRRFQVVDSRATGRFRGTEPEPRDGIEPGHIPGTVNIPFTDFLSQEGLEKSPEEIRHLFQEKKVDLSKPLVATCGSGVTACHVALGAYLCGKPDVPIYDGSWVEWYMRARPEDVISEGRGKTH.

Residue Ala-2 is modified to N-acetylalanine. Phosphoserine occurs at positions 3, 15, 23, and 35. A Rhodanese 1 domain is found at 25 to 144 (AGQPLQLLDA…WLRQNLPLSS (120 aa)). Lys-40 carries the N6-acetyllysine; alternate modification. Lys-40 carries the post-translational modification N6-succinyllysine; alternate. Residues 145–160 (GKSQPAPAEFRAQLDP) are hinge. An N6-succinyllysine mark is found at Lys-146 and Lys-164. Residues 174–288 (ESRRFQVVDS…WYMRARPEDV (115 aa)) enclose the Rhodanese 2 domain. Arg-188 is a substrate binding site. The active-site Cysteine persulfide intermediate is Cys-248.

As to quaternary structure, monomer (active form). Homodimer; disulfide-linked (inactive form).

Its subcellular location is the cytoplasm. The protein localises to the mitochondrion. The protein resides in the synapse. It localises to the synaptosome. The catalysed reaction is 2-oxo-3-sulfanylpropanoate + [thioredoxin]-dithiol = [thioredoxin]-disulfide + hydrogen sulfide + pyruvate + H(+). By oxidative stress, and thioredoxin. Under oxidative stress conditions, the catalytic cysteine site is converted to a sulfenate which inhibits the MPST enzyme activity. Reduced thioredoxin cleaves an intersubunit disulfide bond to turn on the redox switch and reactivate the enzyme. In terms of biological role, transfer of a sulfur ion to cyanide or to other thiol compounds. Also has weak rhodanese activity. Detoxifies cyanide and is required for thiosulfate biosynthesis. Acts as an antioxidant. In combination with cysteine aminotransferase (CAT), contributes to the catabolism of cysteine and is an important producer of hydrogen sulfide in the brain, retina and vascular endothelial cells. Hydrogen sulfide H(2)S is an important synaptic modulator, signaling molecule, smooth muscle contractor and neuroprotectant. Its production by the 3MST/CAT pathway is regulated by calcium ions. The protein is 3-mercaptopyruvate sulfurtransferase (MPST) of Homo sapiens (Human).